Reading from the N-terminus, the 350-residue chain is Serine-threonine kinase receptor-associated protein (350 aa).

7 WD repeats span residues 12–56, 57–96, 98–137, 141–179, 180–212, 221–262, and 263–302; these read GHTR…GTFL, GHKGAVWGATLNKDATKAATAAADFTAKVWDAVSGDELMT, AHKHIVKTVDFTQDSNYLLTGGQDKLLRIYDLNKPEAEPK, GHTSGIKKALWCSEDKQILSADDKTVRLWDHATMTEVKS, LNFNMSVSSMEYIPEGEILVITYGRSIAFHSAV, EAPA…ESYK, and GHFGPIHCVRFSPDGELYASGSEDGTLRLWQTVVGKTYGL. Residues serine 312, serine 335, and serine 338 each carry the phosphoserine modification.

The protein belongs to the WD repeat STRAP family. Part of the core SMN complex that contains SMN1, GEMIN2/SIP1, DDX20/GEMIN3, GEMIN4, GEMIN5, GEMIN6, GEMIN7, GEMIN8 and STRAP/UNRIP. Part of the SMN-Sm complex that contains SMN1, GEMIN2/SIP1, DDX20/GEMIN3, GEMIN4, GEMIN5, GEMIN6, GEMIN7, GEMIN8, STRAP/UNRIP and the Sm proteins SNRPB, SNRPD1, SNRPD2, SNRPD3, SNRPE, SNRPF and SNRPG. Associates with the SMN complex in the cytoplasm but not in the nucleus. Interacts with GEMIN6; the interaction is direct. Interacts with GEMIN7; the interaction is direct. Interacts with CSDE1/UNR and MAWBP. Interacts with PDPK1. Interacts with TRIM48.

The protein resides in the cytoplasm. It is found in the nucleus. Its function is as follows. The SMN complex catalyzes the assembly of small nuclear ribonucleoproteins (snRNPs), the building blocks of the spliceosome, and thereby plays an important role in the splicing of cellular pre-mRNAs. Most spliceosomal snRNPs contain a common set of Sm proteins SNRPB, SNRPD1, SNRPD2, SNRPD3, SNRPE, SNRPF and SNRPG that assemble in a heptameric protein ring on the Sm site of the small nuclear RNA to form the core snRNP (Sm core). In the cytosol, the Sm proteins SNRPD1, SNRPD2, SNRPE, SNRPF and SNRPG are trapped in an inactive 6S pICln-Sm complex by the chaperone CLNS1A that controls the assembly of the core snRNP. To assemble core snRNPs, the SMN complex accepts the trapped 5Sm proteins from CLNS1A forming an intermediate. Binding of snRNA inside 5Sm triggers eviction of the SMN complex, thereby allowing binding of SNRPD3 and SNRPB to complete assembly of the core snRNP. STRAP plays a role in the cellular distribution of the SMN complex. Negatively regulates TGF-beta signaling but positively regulates the PDPK1 kinase activity by enhancing its autophosphorylation and by significantly reducing the association of PDPK1 with 14-3-3 protein. The chain is Serine-threonine kinase receptor-associated protein (STRAP) from Homo sapiens (Human).